Here is a 944-residue protein sequence, read N- to C-terminus: Isoleucine--tRNA ligase (944 aa).

The short motif at 58–68 (PYANGSIHIGH) is the 'HIGH' region element. Residue glutamate 563 coordinates L-isoleucyl-5'-AMP. Residues 604–608 (KMSKS) carry the 'KMSKS' region motif. Lysine 607 serves as a coordination point for ATP. Zn(2+)-binding residues include cysteine 907, cysteine 910, cysteine 927, and cysteine 930.

Belongs to the class-I aminoacyl-tRNA synthetase family. IleS type 1 subfamily. Monomer. Zn(2+) serves as cofactor.

Its subcellular location is the cytoplasm. It catalyses the reaction tRNA(Ile) + L-isoleucine + ATP = L-isoleucyl-tRNA(Ile) + AMP + diphosphate. In terms of biological role, catalyzes the attachment of isoleucine to tRNA(Ile). As IleRS can inadvertently accommodate and process structurally similar amino acids such as valine, to avoid such errors it has two additional distinct tRNA(Ile)-dependent editing activities. One activity is designated as 'pretransfer' editing and involves the hydrolysis of activated Val-AMP. The other activity is designated 'posttransfer' editing and involves deacylation of mischarged Val-tRNA(Ile). The chain is Isoleucine--tRNA ligase from Salmonella typhi.